Reading from the N-terminus, the 281-residue chain is Bifunctional protein FolD (281 aa).

Residues 167–169 (GRS) and Ser192 each bind NADP(+).

Belongs to the tetrahydrofolate dehydrogenase/cyclohydrolase family. As to quaternary structure, homodimer.

It catalyses the reaction (6R)-5,10-methylene-5,6,7,8-tetrahydrofolate + NADP(+) = (6R)-5,10-methenyltetrahydrofolate + NADPH. It carries out the reaction (6R)-5,10-methenyltetrahydrofolate + H2O = (6R)-10-formyltetrahydrofolate + H(+). The protein operates within one-carbon metabolism; tetrahydrofolate interconversion. Its function is as follows. Catalyzes the oxidation of 5,10-methylenetetrahydrofolate to 5,10-methenyltetrahydrofolate and then the hydrolysis of 5,10-methenyltetrahydrofolate to 10-formyltetrahydrofolate. The sequence is that of Bifunctional protein FolD from Alcanivorax borkumensis (strain ATCC 700651 / DSM 11573 / NCIMB 13689 / SK2).